The sequence spans 429 residues: Saccharopine dehydrogenase-like oxidoreductase (429 aa).

The residue at position 2 (alanine 2) is an N-acetylalanine. Phosphoserine is present on serine 217.

This sequence belongs to the saccharopine dehydrogenase family.

The polypeptide is Saccharopine dehydrogenase-like oxidoreductase (SCCPDH) (Homo sapiens (Human)).